The chain runs to 347 residues: Putative histone PARylation factor 1-like (347 aa).

Methionine 1 is subject to N-acetylmethionine. Residues lysine 187 and lysine 234 each carry the N6-acetyllysine modification.

The protein belongs to the HPF1 family.

In Homo sapiens (Human), this protein is Putative histone PARylation factor 1-like.